Here is a 313-residue protein sequence, read N- to C-terminus: L-2-hydroxycarboxylate dehydrogenase (NAD(P)(+)) (313 aa).

Residues 7–13 and 34–37 each bind NADP(+); these read GASGRVG and REHS. The substrate site is built by arginine 86 and arginine 92. NADP(+) is bound by residues asparagine 99 and 121-123; that span reads ITN. Residues asparagine 123 and arginine 154 each coordinate substrate. The active-site Proton acceptor is the histidine 178.

It belongs to the LDH/MDH superfamily. As to quaternary structure, homotetramer.

The protein resides in the cytoplasm. The enzyme catalyses a (2S)-2-hydroxycarboxylate + NAD(+) = a 2-oxocarboxylate + NADH + H(+). The catalysed reaction is a (2S)-2-hydroxycarboxylate + NADP(+) = a 2-oxocarboxylate + NADPH + H(+). Catalyzes the reversible oxidation of (S)-malate and (S)-sulfolactate to oxaloacetate and sulfopyruvate, respectively. Can use both NADH and NADPH, although activity is higher with NADPH. Oxidation of (S)-sulfolactate is observed only in the presence of NADP(+). Can also oxidize tartrate. Cannot reduce pyruvate, nor alpha-ketoglutarate. The sequence is that of L-2-hydroxycarboxylate dehydrogenase (NAD(P)(+)) (mdh) from Methanocaldococcus jannaschii (strain ATCC 43067 / DSM 2661 / JAL-1 / JCM 10045 / NBRC 100440) (Methanococcus jannaschii).